The primary structure comprises 436 residues: Serine hydroxymethyltransferase (436 aa).

Residues L133 and 137–139 each bind (6S)-5,6,7,8-tetrahydrofolate; that span reads GHI. K242 is modified (N6-(pyridoxal phosphate)lysine).

The protein belongs to the SHMT family. As to quaternary structure, homodimer. The cofactor is pyridoxal 5'-phosphate.

The protein resides in the cytoplasm. It carries out the reaction (6R)-5,10-methylene-5,6,7,8-tetrahydrofolate + glycine + H2O = (6S)-5,6,7,8-tetrahydrofolate + L-serine. It functions in the pathway one-carbon metabolism; tetrahydrofolate interconversion. It participates in amino-acid biosynthesis; glycine biosynthesis; glycine from L-serine: step 1/1. Its function is as follows. Catalyzes the reversible interconversion of serine and glycine with tetrahydrofolate (THF) serving as the one-carbon carrier. This reaction serves as the major source of one-carbon groups required for the biosynthesis of purines, thymidylate, methionine, and other important biomolecules. Also exhibits THF-independent aldolase activity toward beta-hydroxyamino acids, producing glycine and aldehydes, via a retro-aldol mechanism. The sequence is that of Serine hydroxymethyltransferase from Pelagibacter ubique (strain HTCC1062).